A 246-amino-acid chain; its full sequence is tRNA (guanine-N(1)-)-methyltransferase (246 aa).

S-adenosyl-L-methionine is bound by residues Gly114 and 134–139; that span reads IGDYIL.

The protein belongs to the RNA methyltransferase TrmD family. In terms of assembly, homodimer.

It localises to the cytoplasm. It carries out the reaction guanosine(37) in tRNA + S-adenosyl-L-methionine = N(1)-methylguanosine(37) in tRNA + S-adenosyl-L-homocysteine + H(+). Functionally, specifically methylates guanosine-37 in various tRNAs. In Coxiella burnetii (strain RSA 331 / Henzerling II), this protein is tRNA (guanine-N(1)-)-methyltransferase.